A 255-amino-acid polypeptide reads, in one-letter code: Ornithine decarboxylase antizyme (255 aa).

It belongs to the ODC antizyme family. Interacts with ODC and thereby sterically blocks ODC homodimerization.

Ornithine decarboxylase (ODC) antizyme protein that negatively regulates ODC activity and intracellular polyamine biosynthesis in response to increased intracellular polyamine levels. Binds to ODC monomers, inhibiting the assembly of the functional ODC homodimer, and targets the monomers for ubiquitin-independent proteolytic destruction by the 26S proteasome. This is Ornithine decarboxylase antizyme (OAZ1) from Candida glabrata (strain ATCC 2001 / BCRC 20586 / JCM 3761 / NBRC 0622 / NRRL Y-65 / CBS 138) (Yeast).